The following is a 270-amino-acid chain: 3-methyl-2-oxobutanoate hydroxymethyltransferase (270 aa).

Positions 53 and 92 each coordinate Mg(2+). Residues 53–54 (DS), Asp-92, and Lys-120 each bind 3-methyl-2-oxobutanoate. Residue Glu-122 participates in Mg(2+) binding. Catalysis depends on Glu-189, which acts as the Proton acceptor.

Belongs to the PanB family. Homodecamer; pentamer of dimers. Requires Mg(2+) as cofactor.

Its subcellular location is the cytoplasm. It catalyses the reaction 3-methyl-2-oxobutanoate + (6R)-5,10-methylene-5,6,7,8-tetrahydrofolate + H2O = 2-dehydropantoate + (6S)-5,6,7,8-tetrahydrofolate. It functions in the pathway cofactor biosynthesis; (R)-pantothenate biosynthesis; (R)-pantoate from 3-methyl-2-oxobutanoate: step 1/2. Its function is as follows. Catalyzes the reversible reaction in which hydroxymethyl group from 5,10-methylenetetrahydrofolate is transferred onto alpha-ketoisovalerate to form ketopantoate. The sequence is that of 3-methyl-2-oxobutanoate hydroxymethyltransferase from Saccharophagus degradans (strain 2-40 / ATCC 43961 / DSM 17024).